The sequence spans 1038 residues: Elongation factor 3 (1038 aa).

HEAT repeat units lie at residues 93–131 (EAYL…SANK), 133–170 (STIR…VAPY), 174–211 (RCLP…VVGN), 213–249 (DIEP…TVEA), 255–287 (MEPL…LMDD), and 292–331 (QLFI…AGGS). E406 is a binding site for ADP. ABC transporter domains are found at residues 426-654 (IFIE…YYEL) and 680-995 (IRLT…EEVT). Positions 716, 924, 927, and 953 each coordinate ADP. Residues 1012–1038 (RKEKKAKDKARKEAEARGEYYSDSDEE) are disordered. A compositionally biased stretch (basic and acidic residues) spans 1021 to 1031 (ARKEAEARGEY).

It belongs to the ABC transporter superfamily. ABCF family. EF3 subfamily. Monomer.

The protein localises to the cytoplasm. It catalyses the reaction ATP + H2O = ADP + phosphate + H(+). It participates in protein biosynthesis; polypeptide chain elongation. Ribosome-dependent ATPase that functions in cytoplasmic translation elongation. Required for the ATP-dependent release of deacylated tRNA from the ribosomal E-site during protein biosynthesis. Stimulates the eEF1A-dependent binding of aminoacyl-tRNA to the ribosomal A-site, which has reduced affinity for tRNA as long as the E-site is occupied. Assists translation termination by stimulating the release of nascent protein from the ribosome by release factors. In Phytophthora infestans (strain T30-4) (Potato late blight agent), this protein is Elongation factor 3.